The chain runs to 373 residues: Lipoyl synthase (373 aa).

The interval 12-36 (HVVSNDHPSSSPLQPGVKQSGEDKI) is disordered. Residues Cys-81, Cys-86, Cys-92, Cys-107, Cys-111, Cys-114, and Ser-323 each contribute to the [4Fe-4S] cluster site. A Radical SAM core domain is found at 93–312 (FSHGTATFMI…EEYGMALGFS (220 aa)). Residues 346-373 (PAVSSTEHRERHTIASKSASKTESIPHR) are disordered. Residues 360–373 (ASKSASKTESIPHR) are compositionally biased toward polar residues.

It belongs to the radical SAM superfamily. Lipoyl synthase family. The cofactor is [4Fe-4S] cluster.

Its subcellular location is the cytoplasm. The enzyme catalyses [[Fe-S] cluster scaffold protein carrying a second [4Fe-4S](2+) cluster] + N(6)-octanoyl-L-lysyl-[protein] + 2 oxidized [2Fe-2S]-[ferredoxin] + 2 S-adenosyl-L-methionine + 4 H(+) = [[Fe-S] cluster scaffold protein] + N(6)-[(R)-dihydrolipoyl]-L-lysyl-[protein] + 4 Fe(3+) + 2 hydrogen sulfide + 2 5'-deoxyadenosine + 2 L-methionine + 2 reduced [2Fe-2S]-[ferredoxin]. It participates in protein modification; protein lipoylation via endogenous pathway; protein N(6)-(lipoyl)lysine from octanoyl-[acyl-carrier-protein]: step 2/2. Catalyzes the radical-mediated insertion of two sulfur atoms into the C-6 and C-8 positions of the octanoyl moiety bound to the lipoyl domains of lipoate-dependent enzymes, thereby converting the octanoylated domains into lipoylated derivatives. This Xylella fastidiosa (strain M12) protein is Lipoyl synthase.